Here is a 371-residue protein sequence, read N- to C-terminus: Cytochrome b (371 aa).

4 helical membrane-spanning segments follow: residues 25 to 45 (FGSM…FLAI), 69 to 90 (WTMQ…YIHI), 105 to 125 (WLSG…GYVL), and 170 to 190 (FFAL…AHIM). Heme b is bound by residues His-75 and His-89. Heme b is bound by residues His-174 and His-188. His-193 provides a ligand contact to a ubiquinone. A run of 4 helical transmembrane segments spans residues 218–238 (NKDM…LSFL), 280–300 (LGGT…PFTH), 312–332 (MTQT…WTAT), and 339–358 (FMFI…FMNP).

Belongs to the cytochrome b family. As to quaternary structure, the cytochrome bc1 complex contains 3 respiratory subunits (MT-CYB, CYC1 and UQCRFS1), 2 core proteins (UQCRC1 and UQCRC2) and probably 6 low-molecular weight proteins. Heme b is required as a cofactor.

Its subcellular location is the mitochondrion inner membrane. Its function is as follows. Component of the ubiquinol-cytochrome c reductase complex (complex III or cytochrome b-c1 complex) that is part of the mitochondrial respiratory chain. The b-c1 complex mediates electron transfer from ubiquinol to cytochrome c. Contributes to the generation of a proton gradient across the mitochondrial membrane that is then used for ATP synthesis. The sequence is that of Cytochrome b (MT-CYB) from Elapsoidea nigra (Usambara garter snake).